A 379-amino-acid polypeptide reads, in one-letter code: UDP-N-acetylglucosamine--N-acetylmuramyl-(pentapeptide) pyrophosphoryl-undecaprenol N-acetylglucosamine transferase (379 aa).

UDP-N-acetyl-alpha-D-glucosamine is bound by residues 10–12 (TGG), Asn124, and Arg165. A disordered region spans residues 174–195 (TRDQGPGIRDQEKHMTDSTGPA). Positions 211, 266, and 311 each coordinate UDP-N-acetyl-alpha-D-glucosamine.

It belongs to the glycosyltransferase 28 family. MurG subfamily.

It localises to the cell inner membrane. The catalysed reaction is di-trans,octa-cis-undecaprenyl diphospho-N-acetyl-alpha-D-muramoyl-L-alanyl-D-glutamyl-meso-2,6-diaminopimeloyl-D-alanyl-D-alanine + UDP-N-acetyl-alpha-D-glucosamine = di-trans,octa-cis-undecaprenyl diphospho-[N-acetyl-alpha-D-glucosaminyl-(1-&gt;4)]-N-acetyl-alpha-D-muramoyl-L-alanyl-D-glutamyl-meso-2,6-diaminopimeloyl-D-alanyl-D-alanine + UDP + H(+). Its pathway is cell wall biogenesis; peptidoglycan biosynthesis. Its function is as follows. Cell wall formation. Catalyzes the transfer of a GlcNAc subunit on undecaprenyl-pyrophosphoryl-MurNAc-pentapeptide (lipid intermediate I) to form undecaprenyl-pyrophosphoryl-MurNAc-(pentapeptide)GlcNAc (lipid intermediate II). This Pelobacter propionicus (strain DSM 2379 / NBRC 103807 / OttBd1) protein is UDP-N-acetylglucosamine--N-acetylmuramyl-(pentapeptide) pyrophosphoryl-undecaprenol N-acetylglucosamine transferase.